A 338-amino-acid chain; its full sequence is Glycerol-3-phosphate dehydrogenase [NAD(P)+] (338 aa).

NADPH is bound by residues Ser-13, Trp-14, and Lys-108. 3 residues coordinate sn-glycerol 3-phosphate: Lys-108, Gly-139, and Ser-141. Residue Ala-143 participates in NADPH binding. Sn-glycerol 3-phosphate-binding residues include Lys-194, Asp-247, Ser-257, Arg-258, and Asn-259. The Proton acceptor role is filled by Lys-194. Residue Arg-258 coordinates NADPH. NADPH-binding residues include Val-282 and Glu-284.

It is found in the cytoplasm. The enzyme catalyses sn-glycerol 3-phosphate + NAD(+) = dihydroxyacetone phosphate + NADH + H(+). It carries out the reaction sn-glycerol 3-phosphate + NADP(+) = dihydroxyacetone phosphate + NADPH + H(+). It functions in the pathway membrane lipid metabolism; glycerophospholipid metabolism. In terms of biological role, catalyzes the reduction of the glycolytic intermediate dihydroxyacetone phosphate (DHAP) to sn-glycerol 3-phosphate (G3P), the key precursor for phospholipid synthesis. The protein is Glycerol-3-phosphate dehydrogenase [NAD(P)+] of Streptococcus pyogenes serotype M6 (strain ATCC BAA-946 / MGAS10394).